Reading from the N-terminus, the 199-residue chain is FMN-dependent NADH:quinone oxidoreductase 4 (199 aa).

Residues serine 10, methionine 95 to leucine 98, and serine 139 to glycine 142 contribute to the FMN site.

The protein belongs to the azoreductase type 1 family. Homodimer. It depends on FMN as a cofactor.

The enzyme catalyses 2 a quinone + NADH + H(+) = 2 a 1,4-benzosemiquinone + NAD(+). It catalyses the reaction N,N-dimethyl-1,4-phenylenediamine + anthranilate + 2 NAD(+) = 2-(4-dimethylaminophenyl)diazenylbenzoate + 2 NADH + 2 H(+). Functionally, quinone reductase that provides resistance to thiol-specific stress caused by electrophilic quinones. In terms of biological role, also exhibits azoreductase activity. Catalyzes the reductive cleavage of the azo bond in aromatic azo compounds to the corresponding amines. The polypeptide is FMN-dependent NADH:quinone oxidoreductase 4 (Burkholderia lata (strain ATCC 17760 / DSM 23089 / LMG 22485 / NCIMB 9086 / R18194 / 383)).